We begin with the raw amino-acid sequence, 295 residues long: 4-hydroxy-tetrahydrodipicolinate synthase (295 aa).

Thr47 provides a ligand contact to pyruvate. Tyr135 acts as the Proton donor/acceptor in catalysis. Residue Lys163 is the Schiff-base intermediate with substrate of the active site. Residue Ile204 coordinates pyruvate.

The protein belongs to the DapA family. In terms of assembly, homotetramer; dimer of dimers.

Its subcellular location is the cytoplasm. The enzyme catalyses L-aspartate 4-semialdehyde + pyruvate = (2S,4S)-4-hydroxy-2,3,4,5-tetrahydrodipicolinate + H2O + H(+). It participates in amino-acid biosynthesis; L-lysine biosynthesis via DAP pathway; (S)-tetrahydrodipicolinate from L-aspartate: step 3/4. Functionally, catalyzes the condensation of (S)-aspartate-beta-semialdehyde [(S)-ASA] and pyruvate to 4-hydroxy-tetrahydrodipicolinate (HTPA). This chain is 4-hydroxy-tetrahydrodipicolinate synthase, found in Caldicellulosiruptor bescii (strain ATCC BAA-1888 / DSM 6725 / KCTC 15123 / Z-1320) (Anaerocellum thermophilum).